Reading from the N-terminus, the 529-residue chain is Peptide chain release factor 3 (529 aa).

A tr-type G domain is found at 11-280 (AKRRTFAIIS…GLVEWAPAPM (270 aa)). Residues 20-27 (SHPDAGKT), 88-92 (DTPGH), and 142-145 (NKLD) each bind GTP.

Belongs to the TRAFAC class translation factor GTPase superfamily. Classic translation factor GTPase family. PrfC subfamily.

The protein localises to the cytoplasm. Increases the formation of ribosomal termination complexes and stimulates activities of RF-1 and RF-2. It binds guanine nucleotides and has strong preference for UGA stop codons. It may interact directly with the ribosome. The stimulation of RF-1 and RF-2 is significantly reduced by GTP and GDP, but not by GMP. This Yersinia enterocolitica serotype O:8 / biotype 1B (strain NCTC 13174 / 8081) protein is Peptide chain release factor 3.